The sequence spans 306 residues: uncharacterized protein (306 aa).

The active-site Proton donor is tyrosine 51. 197–207 is an NADP(+) binding site; the sequence is GPVAKGLLTEK.

This sequence belongs to the aldo/keto reductase family. Aldo/keto reductase 2 subfamily.

This is an uncharacterized protein from Bacillus subtilis (strain 168).